We begin with the raw amino-acid sequence, 446 residues long: ATP-dependent protease ATPase subunit HslU (446 aa).

ATP-binding positions include V18, 60–65 (GVGKTE), D259, E324, and R396.

Belongs to the ClpX chaperone family. HslU subfamily. As to quaternary structure, a double ring-shaped homohexamer of HslV is capped on each side by a ring-shaped HslU homohexamer. The assembly of the HslU/HslV complex is dependent on binding of ATP.

It is found in the cytoplasm. Functionally, ATPase subunit of a proteasome-like degradation complex; this subunit has chaperone activity. The binding of ATP and its subsequent hydrolysis by HslU are essential for unfolding of protein substrates subsequently hydrolyzed by HslV. HslU recognizes the N-terminal part of its protein substrates and unfolds these before they are guided to HslV for hydrolysis. The polypeptide is ATP-dependent protease ATPase subunit HslU (Acidovorax sp. (strain JS42)).